The chain runs to 777 residues: MLDLTNKESESSDNGNSKYEDSIDGREVGTSKPFKEERSLEDLQADLADMAVWMEGLDATKLPLNDPQLLCNGRAFSEVLHNVDKNFFTDGWLETMPENRTTNIMVFRSCTRKLWRKMFDYVNHINRTVVSSRWTDIHERIDGIYESDLPAMVNLGMAVVTLAHIGKNAKRFVDYSKALTSTHKSMMSNVAKMVTTVIDEMPENPCFHEISELHGSQSELNSLSESSGKLNGNGSSERRSNADQILVDAELEIERLRTETENQRKEIERLTKSFETAQHDMSSNSESGDISILEKQNEELRQKRRELEEKNLELDAAVDQFKGIVFELTNENDVLRRSDKERQRLQTVLDAAQSDLDEWKTVANQYQKEAELSKQQDKEIKELLSQNKALKSRLDHHVKSATLEDANKNGIAQLRTQVGGLTALNTELKASLDSKKRCVEQLEIQLIQHKEKVKELEDRKDELIEERNRLENQLIFKEAVTPRSLHESMFEAGNLSFEPFSEKNTLPLEIENKRLTERIQELESLEPLKGELITLKSKNGVLEEEKLFATKQIEELQQQIEDLQENLLKNQEHASGDVVGLKIQLEKAEVEAQQMREAKMRAETNQAQVDEILKKRTAELEVNATALQKAKAVIDELEYNSRPVSEDSMTSVQAFKEMKEENEKLRQKVEKLEIELNTVTQGFEQENRLLTSASHQQVLNRSIDEVMSMRAHAGSEEPQTLLDTQKMSGALPWRSLASETRRELPTAMASILVLGFLVFIAWMFININSALNAPPNA.

Composition is skewed to basic and acidic residues over residues 1–10 (MLDLTNKESE) and 18–36 (KYED…PFKE). Residues 1 to 36 (MLDLTNKESESSDNGNSKYEDSIDGREVGTSKPFKE) form a disordered region. Positions 1–234 (MLDLTNKESE…ESSGKLNGNG (234 aa)) are interaction with dli-1. Residues 44 to 169 (QADLADMAVW…VTLAHIGKNA (126 aa)) form the Calponin-homology (CH) domain. 2 disordered regions span residues 217–242 (QSEL…RSNA) and 273–292 (SFET…DISI). Low complexity predominate over residues 218-235 (SELNSLSESSGKLNGNGS). Coiled-coil stretches lie at residues 236–399 (SERR…HHVK) and 425–688 (NTEL…QENR). The segment covering 273–288 (SFETAQHDMSSNSESG) has biased composition (polar residues). The chain crosses the membrane as a helical span at residues 747–767 (AMASILVLGFLVFIAWMFINI). The tract at residues 749–777 (ASILVLGFLVFIAWMFININSALNAPPNA) is interaction with unc-84.

This sequence belongs to the hook family. In terms of assembly, homodimer. Interacts with the dynein subunit dli-1 via its N-terminus. May interact with microtubules. Interacts with sut-2. Interacts (via C-terminus) with unc-84 (via C-terminus); the interaction is direct. In terms of tissue distribution, expressed in the syncytial gonad, oocytes, and in all cells during the development of the early embryo.

The protein resides in the nucleus membrane. It is found in the cytoplasm. It localises to the cytoskeleton. The protein localises to the microtubule organizing center. Its subcellular location is the centrosome. Its function is as follows. Cytoskeletal linker protein, which is essential for attachment of the centrosome to the nucleus. Required for dynein localization to the nuclear envelope. Forms a LINC (LInker of Nucleoskeleton and Cytoskeleton) complex together with unc-84, that may be involved in DNA damage repair. In Caenorhabditis elegans, this protein is Zygote defective protein 12.